The following is a 568-amino-acid chain: Malate synthase, glyoxysomal (568 aa).

The segment at 1–20 (MGSLGMYSESGLTKKGSSRG) is disordered. Arg-183 functions as the Proton acceptor in the catalytic mechanism. Asp-469 functions as the Proton donor in the catalytic mechanism. The short motif at 566–568 (SKL) is the Microbody targeting signal element.

The protein belongs to the malate synthase family.

It is found in the glyoxysome. The enzyme catalyses glyoxylate + acetyl-CoA + H2O = (S)-malate + CoA + H(+). Its pathway is carbohydrate metabolism; glyoxylate cycle; (S)-malate from isocitrate: step 2/2. This Cucumis sativus (Cucumber) protein is Malate synthase, glyoxysomal.